We begin with the raw amino-acid sequence, 246 residues long: Probable transcriptional regulatory protein YebC (246 aa).

Positions methionine 1–lysine 20 are disordered.

It belongs to the TACO1 family.

It is found in the cytoplasm. This Shigella dysenteriae serotype 1 (strain Sd197) protein is Probable transcriptional regulatory protein YebC.